A 520-amino-acid chain; its full sequence is Phosphoenolpyruvate carboxykinase (ATP) (520 aa).

Arginine 61, phenylalanine 196, and lysine 202 together coordinate substrate. Residues lysine 202, histidine 222, and 238-246 (GLSGTGKTT) contribute to the ATP site. Positions 202 and 222 each coordinate Mn(2+). Aspartate 259 is a binding site for Mn(2+). ATP is bound by residues glutamate 287, arginine 324, 443-444 (RI), and threonine 449. Residue arginine 324 participates in substrate binding.

Belongs to the phosphoenolpyruvate carboxykinase (ATP) family. Mn(2+) is required as a cofactor.

It localises to the cytoplasm. It carries out the reaction oxaloacetate + ATP = phosphoenolpyruvate + ADP + CO2. It functions in the pathway carbohydrate biosynthesis; gluconeogenesis. Functionally, involved in the gluconeogenesis. Catalyzes the conversion of oxaloacetate (OAA) to phosphoenolpyruvate (PEP) through direct phosphoryl transfer between the nucleoside triphosphate and OAA. The protein is Phosphoenolpyruvate carboxykinase (ATP) of Amoebophilus asiaticus (strain 5a2).